The primary structure comprises 328 residues: Malate dehydrogenase (328 aa).

Gly12–Gly18 serves as a coordination point for NAD(+). The substrate site is built by Arg95 and Arg101. Residues Asn108, Gln115, and Val132 to Asn134 contribute to the NAD(+) site. Asn134 and Arg165 together coordinate substrate. His190 serves as the catalytic Proton acceptor.

It belongs to the LDH/MDH superfamily. MDH type 2 family.

The enzyme catalyses (S)-malate + NAD(+) = oxaloacetate + NADH + H(+). Functionally, catalyzes the reversible oxidation of malate to oxaloacetate. In Paracidovorax citrulli (strain AAC00-1) (Acidovorax citrulli), this protein is Malate dehydrogenase.